We begin with the raw amino-acid sequence, 78 residues long: Large ribosomal subunit protein bL28 (78 aa).

A disordered region spans residues 1 to 21 (MSRVCQVTGKKPMVGNNRSHA).

It belongs to the bacterial ribosomal protein bL28 family.

The chain is Large ribosomal subunit protein bL28 from Shewanella woodyi (strain ATCC 51908 / MS32).